The sequence spans 249 residues: Triosephosphate isomerase (249 aa).

N12 and K14 together coordinate substrate. K14 is subject to N6-acetyllysine. The residue at position 68 (Y68) is a 3'-nitrotyrosine. At S80 the chain carries Phosphoserine. H96 functions as the Electrophile in the catalytic mechanism. S106 is subject to Phosphoserine. K142 participates in a covalent cross-link: Glycyl lysine isopeptide (Lys-Gly) (interchain with G-Cter in SUMO1). N6-succinyllysine is present on K149. K156 is modified (N6-acetyllysine; alternate). K156 carries the N6-succinyllysine; alternate modification. Phosphoserine is present on S159. The active-site Proton acceptor is the E166. T173 carries the post-translational modification Phosphothreonine. K194 carries the N6-acetyllysine; alternate modification. An N6-succinyllysine; alternate modification is found at K194. Residue K194 is modified to N6-methyllysine; alternate. S198 is modified (phosphoserine). Y209 is modified (3'-nitrotyrosine). Position 212 is a phosphoserine (S212). T214 is modified (phosphothreonine). Position 223 is a phosphoserine (S223). K238 carries the N6-acetyllysine modification.

It belongs to the triosephosphate isomerase family. In terms of assembly, homodimer.

It localises to the cytoplasm. It catalyses the reaction dihydroxyacetone phosphate = methylglyoxal + phosphate. It carries out the reaction D-glyceraldehyde 3-phosphate = dihydroxyacetone phosphate. Its pathway is carbohydrate degradation; glycolysis; D-glyceraldehyde 3-phosphate from glycerone phosphate: step 1/1. The protein operates within carbohydrate biosynthesis; gluconeogenesis. Functionally, triosephosphate isomerase is an extremely efficient metabolic enzyme that catalyzes the interconversion between dihydroxyacetone phosphate (DHAP) and D-glyceraldehyde-3-phosphate (G3P) in glycolysis and gluconeogenesis. Its function is as follows. It is also responsible for the non-negligible production of methylglyoxal a reactive cytotoxic side-product that modifies and can alter proteins, DNA and lipids. The sequence is that of Triosephosphate isomerase (TPI1) from Bos taurus (Bovine).